The primary structure comprises 151 residues: Regulatory protein RecX (151 aa).

It belongs to the RecX family.

It localises to the cytoplasm. In terms of biological role, modulates RecA activity. This Prosthecochloris aestuarii (strain DSM 271 / SK 413) protein is Regulatory protein RecX.